A 237-amino-acid chain; its full sequence is Demethylmenaquinone methyltransferase (237 aa).

S-adenosyl-L-methionine contacts are provided by residues T58, D79, and 106–107 (NA).

Belongs to the class I-like SAM-binding methyltransferase superfamily. MenG/UbiE family.

The catalysed reaction is a 2-demethylmenaquinol + S-adenosyl-L-methionine = a menaquinol + S-adenosyl-L-homocysteine + H(+). It functions in the pathway quinol/quinone metabolism; menaquinone biosynthesis; menaquinol from 1,4-dihydroxy-2-naphthoate: step 2/2. Its function is as follows. Methyltransferase required for the conversion of demethylmenaquinol (DMKH2) to menaquinol (MKH2). This Bacillus cytotoxicus (strain DSM 22905 / CIP 110041 / 391-98 / NVH 391-98) protein is Demethylmenaquinone methyltransferase.